Here is a 348-residue protein sequence, read N- to C-terminus: Sex-lethal homolog (348 aa).

2 RRM domains span residues 110–188 (TNLI…YARP) and 196–276 (TNLY…LAEE). Over residues 296–310 (GGGGGGGGGGGGGMG) the composition is skewed to gly residues. Positions 296–317 (GGGGGGGGGGGGGMGGPPPPPM) are disordered.

It localises to the nucleus. In terms of biological role, unknown; apparently not involved in somatic sex determination. In Ceratitis capitata (Mediterranean fruit fly), this protein is Sex-lethal homolog (SXL).